Here is a 318-residue protein sequence, read N- to C-terminus: MSLLLYYALPALGSYAMLSIFFLRRPHLLHTPRAPTFRIRLGAHRGGSGELLENTMEAMENSMAQRSDLLELDCQLTRDRVVVVSHDENLCRQSGLNRDVGSLDFEDLPLYKEKLEVYFSPGHFAHGSDRRMVRLEDLFQRFPRTPMSVEIKGKNEELIREIAGLVRRYDRNEITIWASEKSSVMKKCKAANPEMPLSFTISRGFWVLLSYYLGLLPFIPIPEKFFFCFLPNIINRTYFPFSCSCLNQLLAVVSKWLIMRKSLIRHLEERGVQVVFWCLNEESDFEAAFSVGATGVITDYPTALRHYLDNHGPAARTS.

Topologically, residues 1-2 are cytoplasmic; the sequence is MS. The chain crosses the membrane as a helical span at residues 3-23; that stretch reads LLLYYALPALGSYAMLSIFFL. Residues 24–198 are Extracellular-facing; the sequence is RRPHLLHTPR…KAANPEMPLS (175 aa). A GP-PDE domain is found at 39–308; it reads IRLGAHRGGS…DYPTALRHYL (270 aa). Positions 71, 73, and 86 each coordinate a divalent metal cation. The chain crosses the membrane as a helical span at residues 199–221; it reads FTISRGFWVLLSYYLGLLPFIPI. The Cytoplasmic portion of the chain corresponds to 222-318; the sequence is PEKFFFCFLP…DNHGPAARTS (97 aa).

This sequence belongs to the glycerophosphoryl diester phosphodiesterase family. Widely expressed, with high level in kidney and ovary.

The protein resides in the membrane. It localises to the cytoplasm. Its subcellular location is the perinuclear region. The protein localises to the endoplasmic reticulum. The enzyme catalyses 1-hexadecanoyl-sn-glycero-3-phosphocholine + H2O = 1-hexadecanoyl-sn-glycero-3-phosphate + choline + H(+). The catalysed reaction is 1-hexadecanoyl-sn-glycero-3-phosphocholine + H2O = sn-glycerol 3-phosphocholine + hexadecanoate + H(+). It catalyses the reaction 1-O-(1Z-octadecenyl)-sn-glycero-3-phospho-N-hexadecanoyl-ethanolamine + H2O = 1-O-(1Z-octadecenyl)-sn-glycero-3-phosphate + N-hexadecanoylethanolamine + H(+). It carries out the reaction N-(5Z,8Z,11Z,14Z-eicosatetraenoyl)-1-(9Z-octadecenoyl)-sn-glycero-3-phosphoethanolamine + H2O = N-(5Z,8Z,11Z,14Z-eicosatetraenoyl)-ethanolamine + 1-(9Z-octadecenoyl)-sn-glycero-3-phosphate + H(+). The enzyme catalyses N,1-di-(9Z-octadecenoyl)-sn-glycero-3-phosphoethanolamine + H2O = N-(9Z-octadecenoyl) ethanolamine + 1-(9Z-octadecenoyl)-sn-glycero-3-phosphate + H(+). The catalysed reaction is N-hexadecanoyl-1-(9Z-octadecenoyl)-sn-glycero-3-phosphoethanolamine + H2O = N-hexadecanoylethanolamine + 1-(9Z-octadecenoyl)-sn-glycero-3-phosphate + H(+). It catalyses the reaction 1-O-hexadecyl-sn-glycero-3-phosphocholine + H2O = 1-O-hexadecyl-sn-glycero-3-phosphate + choline + H(+). Its activity is regulated as follows. Lysophospholipase D activity is stimulated by calcium. Loss of lysophospholipase D activity in presence of EDTA. Its function is as follows. Hydrolyzes lysoglycerophospholipids to produce lysophosphatidic acid (LPA) and the corresponding amines. Shows a preference for 1-O-alkyl-sn-glycero-3-phosphocholine (lyso-PAF), lysophosphatidylcholine (lyso-PC) and N-acylethanolamine lysophospholipids. Does not display glycerophosphodiester phosphodiesterase activity, since it cannot hydrolyze either glycerophosphoinositol or glycerophosphocholine. In Homo sapiens (Human), this protein is Lysophospholipase D GDPD3.